Here is a 136-residue protein sequence, read N- to C-terminus: Large ribosomal subunit protein uL16c (136 aa).

Belongs to the universal ribosomal protein uL16 family. In terms of assembly, part of the 50S ribosomal subunit.

It localises to the plastid. It is found in the chloroplast. The chain is Large ribosomal subunit protein uL16c from Illicium oligandrum (Star anise).